The following is a 205-amino-acid chain: tRNA (pseudouridine(54)-N(1))-methyltransferase (205 aa).

S-adenosyl-L-methionine contacts are provided by residues L136, G156, 179–184 (LSPLEL), and C189.

The protein belongs to the methyltransferase superfamily. TrmY family. Homodimer.

It localises to the cytoplasm. The enzyme catalyses pseudouridine(54) in tRNA + S-adenosyl-L-methionine = N(1)-methylpseudouridine(54) in tRNA + S-adenosyl-L-homocysteine + H(+). Its function is as follows. Specifically catalyzes the N1-methylation of pseudouridine at position 54 (Psi54) in tRNAs. The sequence is that of tRNA (pseudouridine(54)-N(1))-methyltransferase from Methanocaldococcus jannaschii (strain ATCC 43067 / DSM 2661 / JAL-1 / JCM 10045 / NBRC 100440) (Methanococcus jannaschii).